The chain runs to 376 residues: PqqA peptide cyclase (376 aa).

Residues 7 to 222 (VGLPLWLLAE…TNEYRDKLKA (216 aa)) form the Radical SAM core domain. 3 residues coordinate [4Fe-4S] cluster: Cys21, Cys25, and Cys28.

Belongs to the radical SAM superfamily. PqqE family. In terms of assembly, interacts with PqqD. The interaction is necessary for activity of PqqE. Requires [4Fe-4S] cluster as cofactor.

It carries out the reaction [PQQ precursor protein] + S-adenosyl-L-methionine = E-Y cross-linked-[PQQ precursor protein] + 5'-deoxyadenosine + L-methionine + H(+). It participates in cofactor biosynthesis; pyrroloquinoline quinone biosynthesis. Its function is as follows. Catalyzes the cross-linking of a glutamate residue and a tyrosine residue in the PqqA protein as part of the biosynthesis of pyrroloquinoline quinone (PQQ). This is PqqA peptide cyclase from Pseudomonas putida (strain ATCC 47054 / DSM 6125 / CFBP 8728 / NCIMB 11950 / KT2440).